The chain runs to 360 residues: Peptide chain release factor 1 (360 aa).

Glutamine 235 is modified (N5-methylglutamine). Positions 284–313 (AKRQQAEASTRRNLLGSGDRSDRNRTYNFP) are disordered.

It belongs to the prokaryotic/mitochondrial release factor family. Methylated by PrmC. Methylation increases the termination efficiency of RF1.

The protein resides in the cytoplasm. Peptide chain release factor 1 directs the termination of translation in response to the peptide chain termination codons UAG and UAA. This is Peptide chain release factor 1 from Citrobacter koseri (strain ATCC BAA-895 / CDC 4225-83 / SGSC4696).